A 209-amino-acid polypeptide reads, in one-letter code: Large ribosomal subunit protein uL3 (209 aa).

The protein belongs to the universal ribosomal protein uL3 family. Part of the 50S ribosomal subunit. Forms a cluster with proteins L14 and L19.

Functionally, one of the primary rRNA binding proteins, it binds directly near the 3'-end of the 23S rRNA, where it nucleates assembly of the 50S subunit. The protein is Large ribosomal subunit protein uL3 of Lactiplantibacillus plantarum (strain ATCC BAA-793 / NCIMB 8826 / WCFS1) (Lactobacillus plantarum).